A 274-amino-acid chain; its full sequence is Tryptophan synthase alpha chain (274 aa).

Residues E49 and D60 each act as proton acceptor in the active site.

This sequence belongs to the TrpA family. As to quaternary structure, tetramer of two alpha and two beta chains.

The catalysed reaction is (1S,2R)-1-C-(indol-3-yl)glycerol 3-phosphate + L-serine = D-glyceraldehyde 3-phosphate + L-tryptophan + H2O. The protein operates within amino-acid biosynthesis; L-tryptophan biosynthesis; L-tryptophan from chorismate: step 5/5. The alpha subunit is responsible for the aldol cleavage of indoleglycerol phosphate to indole and glyceraldehyde 3-phosphate. The sequence is that of Tryptophan synthase alpha chain from Zymomonas mobilis subsp. mobilis (strain ATCC 31821 / ZM4 / CP4).